A 542-amino-acid chain; its full sequence is Sensory neuron membrane protein 2 (542 aa).

Topologically, residues M1–V487 are extracellular. N33, N128, N238, and N274 each carry an N-linked (GlcNAc...) asparagine glycan. Intrachain disulfides connect C283/C351, C312/C378, and C353/C367. A helical transmembrane segment spans residues Q488–I508. At K509 to K542 the chain is on the cytoplasmic side.

The protein belongs to the CD36 family. As to expression, detected in the antenna, legs and wings. Higher levels of expression detected in male compared to female.

The protein resides in the cell membrane. Plays an olfactory role that is not restricted to pheromone sensitivity. The sequence is that of Sensory neuron membrane protein 2 from Aedes aegypti (Yellowfever mosquito).